We begin with the raw amino-acid sequence, 116 residues long: Large ribosomal subunit protein bL17 (116 aa).

This sequence belongs to the bacterial ribosomal protein bL17 family. Part of the 50S ribosomal subunit. Contacts protein L32.

This is Large ribosomal subunit protein bL17 from Microcystis aeruginosa (strain NIES-843 / IAM M-2473).